Reading from the N-terminus, the 272-residue chain is MVPDQDGELRHDVCSLSTSLRLTAHVTSSIVHEQSSNIRYGENRKHGQRYAYHEPLPPEIVARCNGHDGKHLTLVTRNSKPVNVRLEKRGQSFYISKGWKKFVELTDLRVGQCVRFSVSSPSTLDLLILDKHGTSLAIPPSKRDLKLKSKRSTHQDSKGHPSNTDPGPSRIINRRVTKSESSANTQLLVQYFSKRYPIDHLEQLMTGRTEDIEVQTLVGPSVNMVLHTSTDHRCNLKKGWTDFALSNGIKLNTVCIFHFYKTTHLGVIVDIF.

Positions 39-132 form a DNA-binding region, TF-B3 1; the sequence is RYGENRKHGQ…TLDLLILDKH (94 aa). The tract at residues 139–171 is disordered; sequence PPSKRDLKLKSKRSTHQDSKGHPSNTDPGPSRI. A compositionally biased stretch (basic and acidic residues) spans 141–159; sequence SKRDLKLKSKRSTHQDSKG. Residues 180–272 constitute a DNA-binding region (TF-B3 2); the sequence is ESSANTQLLV…THLGVIVDIF (93 aa).

It localises to the nucleus. This is B3 domain-containing protein Os10g0323000 from Oryza sativa subsp. japonica (Rice).